Consider the following 621-residue polypeptide: Zinc metalloproteinase-disintegrin-like NaMP (621 aa).

Positions 1–20 (MIQPLLVAICLVVFPYQGSS) are cleaved as a signal peptide. Residues 21–188 (TILESGKVRD…GESDETIKKI (168 aa)) constitute a propeptide that is removed on maturation. In terms of domain architecture, Peptidase M12B spans 206–402 (KHIELYMVAD…KSAQCILNDP (197 aa)). N-linked (GlcNAc...) asparagine glycosylation is found at asparagine 225, asparagine 268, and asparagine 319. Disulfide bonds link cysteine 317/cysteine 397, cysteine 357/cysteine 381, cysteine 359/cysteine 364, cysteine 413/cysteine 442, cysteine 424/cysteine 437, cysteine 426/cysteine 432, cysteine 436/cysteine 459, cysteine 450/cysteine 456, cysteine 455/cysteine 481, cysteine 468/cysteine 488, cysteine 475/cysteine 507, cysteine 500/cysteine 512, cysteine 519/cysteine 569, cysteine 534/cysteine 579, cysteine 547/cysteine 557, cysteine 564/cysteine 605, and cysteine 599/cysteine 610. Histidine 342 serves as a coordination point for Zn(2+). The active site involves glutamate 343. Positions 346 and 352 each coordinate Zn(2+). One can recognise a Disintegrin domain in the interval 410–496 (TAICGNGFVE…ECPMNHFHMN (87 aa)). The short motif at 474–476 (DCD) is the D/ECD-tripeptide element. An N-linked (GlcNAc...) asparagine glycan is attached at asparagine 551.

This sequence belongs to the venom metalloproteinase (M12B) family. P-III subfamily. P-IIIa sub-subfamily. As to quaternary structure, monomer. Zn(2+) is required as a cofactor. As to expression, expressed by the venom gland.

It localises to the secreted. In terms of biological role, snake venom zinc metalloproteinase that inhibits platelet aggregation and degrades fibrinogen. This is Zinc metalloproteinase-disintegrin-like NaMP from Naja atra (Chinese cobra).